The chain runs to 803 residues: Chromatin structure-remodeling complex subunit rsc1 (803 aa).

In terms of domain architecture, Bromo 1 spans 9 to 117; it reads ADDKKLQRVL…EFCIQQLRTF (109 aa). Residues 128–154 are compositionally biased toward polar residues; it reads WPNTDSPSATTSSPISRNPEYSVSPPN. The tract at residues 128–160 is disordered; that stretch reads WPNTDSPSATTSSPISRNPEYSVSPPNGSKFVK. S168 is modified (phosphoserine). The interval 174 to 206 is disordered; it reads EEDSDVKGRSMVGRDGRYKSEDLKRRKLQPSSK. Residues 178–197 are compositionally biased toward basic and acidic residues; the sequence is DVKGRSMVGRDGRYKSEDLK. The Bromo 2 domain occupies 206-316; it reads KPLSSLEARA…NYLADVLRLE (111 aa). A phosphoserine mark is found at S331 and S334. Residues 351–469 form the BAH domain; it reads TLLNVGDWVL…DDTKQFSKIK (119 aa). Residues 512–525 are compositionally biased toward polar residues; it reads GLPSPATTDSNTHM. The segment at 512–616 is disordered; it reads GLPSPATTDS…RTSTKSTSPI (105 aa). The span at 526–539 shows a compositional bias: low complexity; sequence LPSQGSLLPPSSIS. 2 stretches are compositionally biased toward polar residues: residues 540-553 and 605-615; these read ETKS…TPLS and IMRTSTKSTSP.

Belongs to the RSC1 family. Component of the RSC complex composed of at least arp9, arp42, rsc1, rsc4, rsc7, rsc9, rsc58, sfh1, snf21, ssr1, ssr2, ssr3 and ssr4. The complex interacts with histone and histone variant components of centromeric chromatin.

The protein resides in the nucleus. Its function is as follows. Component of the chromatin structure remodeling complex (RSC), which is involved in transcription regulation and nucleosome positioning. Controls particularly membrane and organelle development genes. This Schizosaccharomyces pombe (strain 972 / ATCC 24843) (Fission yeast) protein is Chromatin structure-remodeling complex subunit rsc1 (rsc1).